Here is a 176-residue protein sequence, read N- to C-terminus: Photosystem I assembly protein Ycf4 (176 aa).

Transmembrane regions (helical) follow at residues 22-42 (FVWAFILFFGSLEFILVGTAS) and 48-68 (LIAFFPQGMVMIFYGISGLFI).

Belongs to the Ycf4 family.

It is found in the plastid thylakoid membrane. In terms of biological role, seems to be required for the assembly of the photosystem I complex. This chain is Photosystem I assembly protein Ycf4, found in Cuscuta gronovii (Common dodder).